The sequence spans 422 residues: Tyrosine--tRNA ligase (422 aa).

Tyrosine 35 contributes to the L-tyrosine binding site. Residues 40-49 (PTADSLHIGH) carry the 'HIGH' region motif. L-tyrosine is bound by residues tyrosine 170 and glutamine 174. A 'KMSKS' region motif is present at residues 232–236 (KFGKT). Position 235 (lysine 235) interacts with ATP. An S4 RNA-binding domain is found at 355–421 (LTLVDLLVES…GKKKYFLVTY (67 aa)).

Belongs to the class-I aminoacyl-tRNA synthetase family. TyrS type 1 subfamily. Homodimer.

Its subcellular location is the cytoplasm. It carries out the reaction tRNA(Tyr) + L-tyrosine + ATP = L-tyrosyl-tRNA(Tyr) + AMP + diphosphate + H(+). Functionally, catalyzes the attachment of tyrosine to tRNA(Tyr) in a two-step reaction: tyrosine is first activated by ATP to form Tyr-AMP and then transferred to the acceptor end of tRNA(Tyr). This Bacillus pumilus (strain SAFR-032) protein is Tyrosine--tRNA ligase.